A 503-amino-acid polypeptide reads, in one-letter code: ATP synthase subunit alpha (503 aa).

Residue 169 to 176 (GDRGTGKT) coordinates ATP.

It belongs to the ATPase alpha/beta chains family. As to quaternary structure, F-type ATPases have 2 components, CF(1) - the catalytic core - and CF(0) - the membrane proton channel. CF(1) has five subunits: alpha(3), beta(3), gamma(1), delta(1), epsilon(1). CF(0) has three main subunits: a(1), b(2) and c(9-12). The alpha and beta chains form an alternating ring which encloses part of the gamma chain. CF(1) is attached to CF(0) by a central stalk formed by the gamma and epsilon chains, while a peripheral stalk is formed by the delta and b chains.

The protein resides in the cell inner membrane. The enzyme catalyses ATP + H2O + 4 H(+)(in) = ADP + phosphate + 5 H(+)(out). Its function is as follows. Produces ATP from ADP in the presence of a proton gradient across the membrane. The alpha chain is a regulatory subunit. The polypeptide is ATP synthase subunit alpha (Leptospira interrogans serogroup Icterohaemorrhagiae serovar copenhageni (strain Fiocruz L1-130)).